The primary structure comprises 616 residues: Dihydroxy-acid dehydratase (616 aa).

Asp-81 provides a ligand contact to Mg(2+). Cys-122 is a binding site for [2Fe-2S] cluster. The Mg(2+) site is built by Asp-123 and Lys-124. Lys-124 is modified (N6-carboxylysine). Residue Cys-195 coordinates [2Fe-2S] cluster. A Mg(2+)-binding site is contributed by Glu-491. Ser-517 acts as the Proton acceptor in catalysis.

The protein belongs to the IlvD/Edd family. Homodimer. Requires [2Fe-2S] cluster as cofactor. Mg(2+) serves as cofactor.

It carries out the reaction (2R)-2,3-dihydroxy-3-methylbutanoate = 3-methyl-2-oxobutanoate + H2O. The catalysed reaction is (2R,3R)-2,3-dihydroxy-3-methylpentanoate = (S)-3-methyl-2-oxopentanoate + H2O. Its pathway is amino-acid biosynthesis; L-isoleucine biosynthesis; L-isoleucine from 2-oxobutanoate: step 3/4. It functions in the pathway amino-acid biosynthesis; L-valine biosynthesis; L-valine from pyruvate: step 3/4. Its function is as follows. Functions in the biosynthesis of branched-chain amino acids. Catalyzes the dehydration of (2R,3R)-2,3-dihydroxy-3-methylpentanoate (2,3-dihydroxy-3-methylvalerate) into 2-oxo-3-methylpentanoate (2-oxo-3-methylvalerate) and of (2R)-2,3-dihydroxy-3-methylbutanoate (2,3-dihydroxyisovalerate) into 2-oxo-3-methylbutanoate (2-oxoisovalerate), the penultimate precursor to L-isoleucine and L-valine, respectively. This is Dihydroxy-acid dehydratase from Yersinia pseudotuberculosis serotype O:3 (strain YPIII).